Here is an 827-residue protein sequence, read N- to C-terminus: MTFCYPCRAFALLTRGFTSFMSGWPRIYYKLLNLPLSILVKSKSIPADPAPELGLDTSRPIMYVLPYNSKADLLTLRAQCLAHDLPDPLEPLEIDGTLLPRYVFIHGGPRVFTYYTPKEESIKLFHDYLDLHRSNPNLDVQMVPVSVMFGRAPGREKGEVNPPLRMLNGVQKFFAVLWLGRDSFVRFSPSVSLRRMADEHGTDKTIAQKLARVARMHFARQRLAAVGPRLPARQDLFNKLLASRAIAKAVEDEARSKKISHEKAQQNAIALMEEIAANFSYEMIRLTDRILGFTWNRLYQGINVHNAERVRQLAHDGHELVYVPCHRSHMDYLLLSYVLYHQGLVPPHIAAGINLNFWPAGPIFRRLGAFFIRRTFKGNKLYSTVFREYLGELFSRGYSVEYFVEGGRSRTGRLLDPKTGTLSMTIQAMLRGGTRPITLIPIYIGYEHVMEVGTYAKELRGATKEKESLPQMLRGLSKLRNLGQGYVNFGEPMPLMTYLNQHVPDWRESIDPIEAVRPAWLTPTVNNIAADLMVRINNAGAANAMNLCCTALLASRQRSLTREQLTEQLNCYLDLMRNVPYSTDSTVPSASASELIDHALQMNKFEVEKDTIGDIIILPREQAVLMTYYRNNIAHMLVLPSLMAAIVTQHRHISRDVLMEHVNVLYPMLKAELFLRWDRDELPDVIDALANEMQRQGLITLQDDELHINPAHSRTLQLLAAGARETLQRYAITFWLLSANPSINRGTLEKESRTVAQRLSVLHGINAPEFFDKAVFSSLVLTLRDEGYISDSGDAEPAETMKVYQLLAELITSDVRLTIESATQGEG.

The HXXXXD motif motif lies at 325 to 330; the sequence is CHRSHM.

Belongs to the GPAT/DAPAT family.

It localises to the cell inner membrane. It catalyses the reaction sn-glycerol 3-phosphate + an acyl-CoA = a 1-acyl-sn-glycero-3-phosphate + CoA. It functions in the pathway phospholipid metabolism; CDP-diacylglycerol biosynthesis; CDP-diacylglycerol from sn-glycerol 3-phosphate: step 1/3. The sequence is that of Glycerol-3-phosphate acyltransferase from Shigella dysenteriae serotype 1 (strain Sd197).